A 207-amino-acid polypeptide reads, in one-letter code: MQASADSTRMECLWSNWKCQAIDLLYWRDIKQTGIVFGSVLLMLFSLIQFSVVSVMAYLALAALSATISFRIYKSVLQAVQKTDEGHPFKSYLDMEISLSQEQIQKYTDCLQVYTNSIAKELRRLFLVQDLVDSLKFAVLMWLLTYVGALFNGLTLLIMAVVSMFSLPVVYDKYQAQIDQYLGLVRTNMNTIMTKIQAKIPGTKQKE.

A Reticulon domain is found at 21–207 (AIDLLYWRDI…AKIPGTKQKE (187 aa)). 2 consecutive transmembrane segments (helical) span residues 35–55 (IVFGSVLLMLFSLIQFSVVSV) and 139–159 (VLMWLLTYVGALFNGLTLLIM).

In terms of tissue distribution, expressed in the animal hemisphere (presumptive neural ectoderm) of blastula and gastrula stage embryos, and along the anterior neural border, in the panplacodal primordium, and in the dorsolateral side of archenteron roof of late neurula embryos. At the tailbud stage, expression localizes to the central nervous system, including the spinal cord, prosencephalon, mesencephalon and rhombencephalon, as well as the lateral line placode, otic vesicle and pronephros.

The protein resides in the endoplasmic reticulum membrane. It localises to the nucleus. Inhibits amyloid precursor protein processing, probably by blocking BACE1 activity. The chain is Reticulon-1-A (rtn1-a) from Xenopus laevis (African clawed frog).